The sequence spans 228 residues: Phosphoribosylformylglycinamidine synthase subunit PurQ (228 aa).

In terms of domain architecture, Glutamine amidotransferase type-1 spans 3–226; it reads FAVVVFPGSN…VTYWRDAHVV (224 aa). Residue Cys-86 is the Nucleophile of the active site. Catalysis depends on residues His-195 and Glu-197.

As to quaternary structure, part of the FGAM synthase complex composed of 1 PurL, 1 PurQ and 2 PurS subunits.

The protein resides in the cytoplasm. It catalyses the reaction N(2)-formyl-N(1)-(5-phospho-beta-D-ribosyl)glycinamide + L-glutamine + ATP + H2O = 2-formamido-N(1)-(5-O-phospho-beta-D-ribosyl)acetamidine + L-glutamate + ADP + phosphate + H(+). It carries out the reaction L-glutamine + H2O = L-glutamate + NH4(+). The protein operates within purine metabolism; IMP biosynthesis via de novo pathway; 5-amino-1-(5-phospho-D-ribosyl)imidazole from N(2)-formyl-N(1)-(5-phospho-D-ribosyl)glycinamide: step 1/2. Its function is as follows. Part of the phosphoribosylformylglycinamidine synthase complex involved in the purines biosynthetic pathway. Catalyzes the ATP-dependent conversion of formylglycinamide ribonucleotide (FGAR) and glutamine to yield formylglycinamidine ribonucleotide (FGAM) and glutamate. The FGAM synthase complex is composed of three subunits. PurQ produces an ammonia molecule by converting glutamine to glutamate. PurL transfers the ammonia molecule to FGAR to form FGAM in an ATP-dependent manner. PurS interacts with PurQ and PurL and is thought to assist in the transfer of the ammonia molecule from PurQ to PurL. In Anoxybacillus flavithermus (strain DSM 21510 / WK1), this protein is Phosphoribosylformylglycinamidine synthase subunit PurQ.